Consider the following 268-residue polypeptide: Small ribosomal subunit protein uS3 (268 aa).

The 69-residue stretch at 38 to 106 (IRKLLATGME…QVQLNILEVK (69 aa)) folds into the KH type-2 domain. The interval 218–268 (VAAPAGDRPRRERPSRPRRSGATGTTATSTEAGRAATATADAPATTEQKEG) is disordered. Residues 237–268 (SGATGTTATSTEAGRAATATADAPATTEQKEG) show a composition bias toward low complexity.

Belongs to the universal ribosomal protein uS3 family. Part of the 30S ribosomal subunit. Forms a tight complex with proteins S10 and S14.

In terms of biological role, binds the lower part of the 30S subunit head. Binds mRNA in the 70S ribosome, positioning it for translation. The polypeptide is Small ribosomal subunit protein uS3 (Rhodococcus jostii (strain RHA1)).